Consider the following 337-residue polypeptide: Alcohol dehydrogenase 1 (337 aa).

Residues cysteine 37, histidine 58, cysteine 89, cysteine 92, cysteine 95, cysteine 103, and cysteine 145 each coordinate Zn(2+).

This sequence belongs to the zinc-containing alcohol dehydrogenase family. As to quaternary structure, multimeric (with different ratios of monomers). Zn(2+) is required as a cofactor.

The enzyme catalyses a primary alcohol + NAD(+) = an aldehyde + NADH + H(+). It carries out the reaction a secondary alcohol + NAD(+) = a ketone + NADH + H(+). It participates in alcohol metabolism; ethanol biosynthesis via fermentation pathway. With respect to regulation, inhibited by ethanol. This chain is Alcohol dehydrogenase 1 (adhA), found in Zymomonas mobilis subsp. mobilis (strain ATCC 31821 / ZM4 / CP4).